Here is a 488-residue protein sequence, read N- to C-terminus: MNTQQLAKLRSIVPEMRRVRHIHFVGIGGAGMGGIAEVLANEGYQISGSDLAPNAVTQQLTALGATIYFNHRPENVLDASVVVVSSAISADNPEIVAAHEARIPVIRRAEMLAELMRFRHGIAVAGTHGKTTTTAMVSSIYAEAGLDPTFVNGGLVKAAGTHARLGNSRYLIAEADESDASFLHLQPMVAIVTNIEADHMDTYHGDFENLKQTFINFLHNLPFYGRAVMCVDDPVIRELLPRVGRQITTYGFSEDADVRVENYRQTGAQGHFTLVRQDKPELHVTLNAPGRHNALNAAAAVSVATEEGIEDDAILRALESFQGTGRRFDFLGEFPLANVNGKSGTAMLVDDYGHHPTEVDATVRAARAGWPEKNLVMIFQPHRYTRTRDLYDDFANVLSQVDVLLMLDVYPAGEAPIPGADSRSLCRTIRARGKVDPILVSDPAQVAAMLAPVLSGNDLILVQGAGNIGKIARQLAEAKLQPEENAHG.

126–132 contacts ATP; that stretch reads GTHGKTT.

Belongs to the MurCDEF family.

It is found in the cytoplasm. The catalysed reaction is UDP-N-acetyl-alpha-D-muramate + L-alanine + ATP = UDP-N-acetyl-alpha-D-muramoyl-L-alanine + ADP + phosphate + H(+). Its pathway is cell wall biogenesis; peptidoglycan biosynthesis. Functionally, cell wall formation. The protein is UDP-N-acetylmuramate--L-alanine ligase of Cronobacter sakazakii (strain ATCC BAA-894) (Enterobacter sakazakii).